The primary structure comprises 212 residues: MLADHQIPEQSMDEEERTSSRGWMREFKYPSNLRDITEEARISLSSVAHCGGVDELLHESSELAWRTNMSPPHRALFTFSKKTDISYVMLFLDYSRDESYCPQEVRIDLGDGTNDWWLKMYRRVDQPKGWVKIPIHDAFGNPLRVMSLQMTIMKNHEKGRDCVVRHFRVLGPFRSRYDSMNRMILGPSAVLEARPGTEPIKDAIMNHYQSMR.

A DOC domain is found at 12-196 (MDEEERTSSR…PSAVLEARPG (185 aa)).

This sequence belongs to the APC10 family. As to quaternary structure, the APC/C complex is probably composed of at least 12 subunits: apc-2, apc-10, apc-11, cdc-26, emb-1, emb-27, emb-30, mat-1, mat-2, mat-3, such-1 and gfi-3.

It participates in protein modification; protein ubiquitination. In terms of biological role, probable component of the anaphase promoting complex/cyclosome (APC/C), a cell cycle-regulated E3 ubiquitin ligase that controls progression through mitosis and the G1 phase of the cell cycle. The APC/C complex acts by mediating ubiquitination and subsequent degradation of target proteins. In Caenorhabditis elegans, this protein is Anaphase-promoting complex subunit 10.